The primary structure comprises 347 residues: D-fructose 1,6-bisphosphatase class 2/sedoheptulose 1,7-bisphosphatase (347 aa).

Residues Asp33, Glu57, Asp97, and Glu100 each contribute to the Mn(2+) site. Substrate-binding positions include 100–102, Tyr131, 176–178, and 198–200; these read EGT, RKR, and DGD. Residue Glu225 coordinates Mn(2+).

It belongs to the FBPase class 2 family. In terms of assembly, homotetramer. It depends on Mn(2+) as a cofactor.

The enzyme catalyses beta-D-fructose 1,6-bisphosphate + H2O = beta-D-fructose 6-phosphate + phosphate. It carries out the reaction D-sedoheptulose 1,7-bisphosphate + H2O = D-sedoheptulose 7-phosphate + phosphate. Its pathway is carbohydrate biosynthesis; Calvin cycle. Its function is as follows. Catalyzes the hydrolysis of fructose 1,6-bisphosphate (Fru 1,6-P2) and sedoheptulose 1,7-bisphosphate (Sed 1,7-P2) to fructose 6-phosphate and sedoheptulose 7-phosphate, respectively. The chain is D-fructose 1,6-bisphosphatase class 2/sedoheptulose 1,7-bisphosphatase from Synechococcus sp. (strain JA-2-3B'a(2-13)) (Cyanobacteria bacterium Yellowstone B-Prime).